A 449-amino-acid chain; its full sequence is Methionine aminopeptidase 2 (449 aa).

The segment at 1–91 (MAAQAAPELA…PRIPLTTLFP (91 aa)) is disordered. Acidic residues predominate over residues 34–50 (EEAENEGDSDDDRDDEQ). Basic residues predominate over residues 61 to 75 (KKKKKKRPKKKKKTA). A substrate-binding site is contributed by His-199. Asp-219, Asp-230, and His-299 together coordinate a divalent metal cation. A substrate-binding site is contributed by His-307. Glu-335 and Glu-430 together coordinate a divalent metal cation.

It belongs to the peptidase M24A family. Methionine aminopeptidase eukaryotic type 2 subfamily. The cofactor is Co(2+). Zn(2+) serves as cofactor. Mn(2+) is required as a cofactor. Requires Fe(2+) as cofactor.

Its subcellular location is the cytoplasm. It carries out the reaction Release of N-terminal amino acids, preferentially methionine, from peptides and arylamides.. Its function is as follows. Cotranslationally removes the N-terminal methionine from nascent proteins. The N-terminal methionine is often cleaved when the second residue in the primary sequence is small and uncharged (Met-Ala-, Cys, Gly, Pro, Ser, Thr, or Val). This Arthroderma benhamiae (strain ATCC MYA-4681 / CBS 112371) (Trichophyton mentagrophytes) protein is Methionine aminopeptidase 2.